Consider the following 85-residue polypeptide: UPF0291 protein SSA_1878 (85 aa).

Positions 58–85 (GNDVTPEKLRQVQREKGLHGRSLDDPES) are disordered. Residues 62 to 85 (TPEKLRQVQREKGLHGRSLDDPES) are compositionally biased toward basic and acidic residues.

This sequence belongs to the UPF0291 family.

The protein resides in the cytoplasm. The polypeptide is UPF0291 protein SSA_1878 (Streptococcus sanguinis (strain SK36)).